The chain runs to 171 residues: uncharacterized protein (171 aa).

It to A.aeolicus aq_616.

This is an uncharacterized protein from Aquifex aeolicus (strain VF5).